The chain runs to 146 residues: Protein MGF 100-3L (146 aa).

This sequence belongs to the asfivirus MGF 100 family.

Plays a role in virus cell tropism, and may be required for efficient virus replication in macrophages. The polypeptide is Protein MGF 100-3L (Ornithodoros (relapsing fever ticks)).